A 374-amino-acid polypeptide reads, in one-letter code: Queuine tRNA-ribosyltransferase (374 aa).

The Proton acceptor role is filled by Asp-89. Substrate contacts are provided by residues 89 to 93 (DSGGF), Asp-143, Gln-185, and Gly-212. The segment at 243-249 (GVGKPED) is RNA binding. Asp-262 serves as the catalytic Nucleophile. An RNA binding; important for wobble base 34 recognition region spans residues 267–271 (TRNAR). Residues Cys-300, Cys-302, Cys-305, and His-331 each coordinate Zn(2+).

The protein belongs to the queuine tRNA-ribosyltransferase family. As to quaternary structure, homodimer. Within each dimer, one monomer is responsible for RNA recognition and catalysis, while the other monomer binds to the replacement base PreQ1. It depends on Zn(2+) as a cofactor.

The catalysed reaction is 7-aminomethyl-7-carbaguanine + guanosine(34) in tRNA = 7-aminomethyl-7-carbaguanosine(34) in tRNA + guanine. It participates in tRNA modification; tRNA-queuosine biosynthesis. Catalyzes the base-exchange of a guanine (G) residue with the queuine precursor 7-aminomethyl-7-deazaguanine (PreQ1) at position 34 (anticodon wobble position) in tRNAs with GU(N) anticodons (tRNA-Asp, -Asn, -His and -Tyr). Catalysis occurs through a double-displacement mechanism. The nucleophile active site attacks the C1' of nucleotide 34 to detach the guanine base from the RNA, forming a covalent enzyme-RNA intermediate. The proton acceptor active site deprotonates the incoming PreQ1, allowing a nucleophilic attack on the C1' of the ribose to form the product. After dissociation, two additional enzymatic reactions on the tRNA convert PreQ1 to queuine (Q), resulting in the hypermodified nucleoside queuosine (7-(((4,5-cis-dihydroxy-2-cyclopenten-1-yl)amino)methyl)-7-deazaguanosine). The polypeptide is Queuine tRNA-ribosyltransferase (Saccharophagus degradans (strain 2-40 / ATCC 43961 / DSM 17024)).